A 408-amino-acid chain; its full sequence is MKITGIIVEYNPFHNGHKYHIKKTRSLTNCEGIIAVISGNFVQRGAPSIVDKWNKTKMALLNGVDLVLELPALYSLSSAEFFAYGAVSLLENLGVVKNLCFGSECEDIKLLTLMGKILYEEPEELKLTLKERLHQGMSYASARGNALKEFLCHRYSLKNNSITEMLHLPNNILAIEYCKSLARLKSTINPVSIKRIGNSYNSTYINNRFSSATSIRNFLKENNSLQELEKALPYNILCILKDLSHSNYRFTFEDSLLPYLKYKNLFYGKNIKYLPDVSEGLENRIESALKNASSYDQIINYAKTKRYAYSRISRILCQFFLGFENLDTKVLRKNRCPYARVLGFNNKGMEILKKIKQNSSIPVYTKLPKNANDMLKLDLMATKGYSLLNKNIAFNQDYISSPLIIDKI.

ATP-binding positions include 7–20 (IVEY…HKYH), G102, N170, and 195–196 (RI).

It belongs to the TmcAL family.

The protein resides in the cytoplasm. It carries out the reaction cytidine(34) in elongator tRNA(Met) + acetate + ATP = N(4)-acetylcytidine(34) in elongator tRNA(Met) + AMP + diphosphate. Catalyzes the formation of N(4)-acetylcytidine (ac(4)C) at the wobble position of elongator tRNA(Met), using acetate and ATP as substrates. First activates an acetate ion to form acetyladenylate (Ac-AMP) and then transfers the acetyl group to tRNA to form ac(4)C34. The sequence is that of tRNA(Met) cytidine acetate ligase from Clostridium kluyveri (strain NBRC 12016).